The primary structure comprises 1420 residues: MMDRNELPFCNKTIDRAAMKRLIGKLVVCFGIASTTNILDQVKVLGFQQATEASISLGIDDLSAVPTRGWLVRDAEKQGYVSEGHYRCGSLHAIEKLRQSIEAWYATSECLKREMSPSFKMIDPLNPVHMMSVSGARGTISQVHQLLGMRGLMADPRGQVIDLPIRRNLREGLSLTEYIISCYGARKGVVDTAVRTSDAGYLTRRLVEVVQHIAVRRRDCETPRSLAFLTSNTGERRRGFLGTMPHQGLVGRVLADHVYWDVRCIATRNQDISDGLASNLMASSQPIHVRSPLTCKSIFWICQFCYGWSLAHCNLVELGEAVGIIAGQSIGEPGTQLTLRTFHTGGVFTGDIAEYVRIPFNGLIKFDERLLHPTRTRHGHPAWMCRNDLPLFIGNSVGTQNSLIPAQSLLMIRTGQYVESQQVIAEVRAKEFPPKECIRKPIYPNSRGEIHWSKFVWHVRDSICNIARLVREASHIWILSGSPSKFDGNSFFHKDQDRVRIKPHPIKRIRSHSEGIFEAQASASNCVDRRKGIQEFGTDSKYFSNWSKRPRSNYILSNVWLERAELENSVSLLMERCQKNIKKLDFVSINVQLNNGSDQDHIFATYENFEYQTIVSGIIKYGTVEIKPVNPKRLQLDGGTGNKSSRPWCRVVRKGNFFLIPEEVYLTHEPSSSILVTNNAIVKKGAQITNNIITKSGGLIRMRKRSRDATTIRILPGYIYNPEKQINISKRGNTLLAPGNRISDDIEVKNWIYLQPFTFRRKGKTFVLMTPVSEYNLSSDSLAQVASRFDKPKTQRRAKAKTLSFICCKNGEKIEVINDVPTQLVRLCLIIEWQKYLHETLPRKRNYFSLISVKISYLFKTFLQVNPMVSPPTQRGVRVDEIFRTSTPLGKPSPPQLDLANSCCKSAVNCQGIIHLTLEPATSFLILSPFNLSRNNSVTDTRDGGCGGEIGKYFYGSEDGFFCIGENKKKISLSSKCISENYANPNVEEGWIKARRASSNLGQRKAEEVGLVGTLSPISCSSIPHHLSLGGKNLSTRKGFVDYSIDKSEHQDFYLIDESKLLLKCPINFYVKKGFLDKPSYLPTRVFSREIMLISLGLLISESRYLHRDRTCFQSGQVMAIHQDYSLVRTGKTFLATRGANPHKSSGDILEEGDTLITLPYDRLKSGDITQGLPKVEQLLESRSIASISAGIGDLFEKWCQNITKLIGNPWSHLLGAGRSMEHCQLILIDQIRKVYESQGVRICDKHLEIIVRQLTSRVVASEDGVTNVFLPGELVELSQAERINRVLKKSIFYEPIVLGMTRASLSTTSFLAEASFQETTRVLAKAALRGRIDWLKGLKENVVIGDSVPVGTGSPEIYCQLNINKEKESRLASGGSKKLTKWETGSSLSGYHKKRDFNPSFFIRKELNRSFTRLHLDMW.

Zn(2+) contacts are provided by C220, C295, C302, and C305.

The protein belongs to the RNA polymerase beta' chain family. RpoC2 subfamily. As to quaternary structure, in plastids the minimal PEP RNA polymerase catalytic core is composed of four subunits: alpha, beta, beta', and beta''. When a (nuclear-encoded) sigma factor is associated with the core the holoenzyme is formed, which can initiate transcription. Zn(2+) is required as a cofactor.

It is found in the plastid. Its subcellular location is the chloroplast. The enzyme catalyses RNA(n) + a ribonucleoside 5'-triphosphate = RNA(n+1) + diphosphate. In terms of biological role, DNA-dependent RNA polymerase catalyzes the transcription of DNA into RNA using the four ribonucleoside triphosphates as substrates. This chain is DNA-directed RNA polymerase subunit beta'', found in Adiantum capillus-veneris (Maidenhair fern).